The primary structure comprises 451 residues: Cytochrome c biogenesis protein CcsB (451 aa).

A run of 3 helical transmembrane segments spans residues 30–50 (LRLAIVLLLAIALFSISGTVI), 89–109 (TWWFLSLLVLFGTSLTTCTFT), and 175–195 (IGPIVVHAAMLIILGGAIWGA).

It belongs to the Ccs1/CcsB family. As to quaternary structure, may interact with CcsA.

The protein localises to the cellular thylakoid membrane. Functionally, required during biogenesis of c-type cytochromes (cytochrome c6 and cytochrome f) at the step of heme attachment. The sequence is that of Cytochrome c biogenesis protein CcsB from Crocosphaera subtropica (strain ATCC 51142 / BH68) (Cyanothece sp. (strain ATCC 51142)).